The primary structure comprises 358 residues: DNA polymerase IV (358 aa).

Positions 4-185 (IIHVDMDCFY…LPLIKIPGVG (182 aa)) constitute a UmuC domain. Residues aspartate 8 and aspartate 103 each coordinate Mg(2+). The active site involves glutamate 104.

This sequence belongs to the DNA polymerase type-Y family. As to quaternary structure, monomer. Mg(2+) serves as cofactor.

It is found in the cytoplasm. It catalyses the reaction DNA(n) + a 2'-deoxyribonucleoside 5'-triphosphate = DNA(n+1) + diphosphate. In terms of biological role, poorly processive, error-prone DNA polymerase involved in untargeted mutagenesis. Copies undamaged DNA at stalled replication forks, which arise in vivo from mismatched or misaligned primer ends. These misaligned primers can be extended by PolIV. Exhibits no 3'-5' exonuclease (proofreading) activity. May be involved in translesional synthesis, in conjunction with the beta clamp from PolIII. This chain is DNA polymerase IV, found in Shewanella pealeana (strain ATCC 700345 / ANG-SQ1).